The sequence spans 392 residues: Monooxygenase AgnR1 (392 aa).

An N-terminal signal peptide occupies residues 1-20 (MSAPQKCAAVVVGAGPAGLA). An N-linked (GlcNAc...) asparagine glycan is attached at asparagine 134.

Functionally, monooxygenase; part of the gene cluster that mediates the biosynthesis of agnestins, dihydroxy-xanthone metabolites. The pathway begins with the assembly and cyclization of atrochrysone thioester by the non-reducing polyketide synthase Agnpks1. The atrochrysone carboxyl ACP thioesterase AgnL7 then breaks the thioester bond and releases the atrochrysone carboxylic acid as the first enzyme-free intermediate. The decarboxylase AgnL1 then catalyzes the concerted decarboxylation-elimination required to convert atochrysone carboxylic acid into emodin anthrone, which is further oxidized to emodin by the anthrone oxygenase AgnL2. Emodin then undergoes reduction catalyzed by the oxidoreductase AgnL4 to yield the dihydroquinone tautomer which is the substrate for reduction by the short chain dehydrogenase AgnL6 reduction to produce hydroxyketone, followed by AgnL8 dehydration and likely spontaneous autoxidation to chrysophanol. Baeyer-Villiger oxidation by the oxidase AgnL3 leads to monodictyphenone via cleavage of the C-10/C-10a bond of chrysophanol. Alternative cleavage at the C-4a/C-10 bond of chrysophanol also leads to the formation some cephalone F. Further conversion to agnestins A and B, requires reduction to dihydro-monodictyphenone, oxidation to agnestin C probably via an epoxide, and rearrangement to either agnestin A or agnestin B directly, although agnestin A or agnestin B can also interconvert. Within the cluster, AgnR1 is the only unassigned oxidoreductase present which could be involved in this conversion. However, AgnR1 seems not to be involved in this step, and thus genes involved in the proposed oxidation/reduction may be located elsewhere on the genome. Further agnestin A derivatives are probably formed by spontaneous decarboxylations, dehydrations and methanolysis reactions. This is Monooxygenase AgnR1 from Paecilomyces divaricatus (Penicillium divaricatum).